Reading from the N-terminus, the 214-residue chain is Adenylate kinase (214 aa).

ATP is bound at residue 10-15 (GAGKGT). Positions 30 to 59 (STGDMLRAAIKAGTELGKQAKAVIDAGQLV) are NMP. Residues Thr-31, Arg-36, 57-59 (QLV), 85-88 (GFPR), and Gln-92 contribute to the AMP site. An LID region spans residues 122–159 (GRRAHLPSGRTYHVVYNPPKVEGKDDVTGEDLVIREDD). ATP is bound by residues Arg-123 and 132–133 (TY). Positions 156 and 167 each coordinate AMP. Residue Lys-200 coordinates ATP.

The protein belongs to the adenylate kinase family. In terms of assembly, monomer.

It is found in the cytoplasm. It carries out the reaction AMP + ATP = 2 ADP. It functions in the pathway purine metabolism; AMP biosynthesis via salvage pathway; AMP from ADP: step 1/1. Its function is as follows. Catalyzes the reversible transfer of the terminal phosphate group between ATP and AMP. Plays an important role in cellular energy homeostasis and in adenine nucleotide metabolism. This chain is Adenylate kinase, found in Vibrio cholerae serotype O1 (strain ATCC 39541 / Classical Ogawa 395 / O395).